The following is a 356-amino-acid chain: sn-glycerol-3-phosphate import ATP-binding protein UgpC (356 aa).

The ABC transporter domain occupies 4-235; that stretch reads LKLQAVTKSW…PASRFVASFI (232 aa). Position 37–44 (37–44) interacts with ATP; the sequence is GPSGCGKS.

Belongs to the ABC transporter superfamily. sn-glycerol-3-phosphate importer (TC 3.A.1.1.3) family. As to quaternary structure, the complex is composed of two ATP-binding proteins (UgpC), two transmembrane proteins (UgpA and UgpE) and a solute-binding protein (UgpB).

It is found in the cell inner membrane. The catalysed reaction is sn-glycerol 3-phosphate(out) + ATP + H2O = sn-glycerol 3-phosphate(in) + ADP + phosphate + H(+). Part of the ABC transporter complex UgpBAEC involved in sn-glycerol-3-phosphate (G3P) import. Responsible for energy coupling to the transport system. This is sn-glycerol-3-phosphate import ATP-binding protein UgpC from Salmonella typhimurium (strain LT2 / SGSC1412 / ATCC 700720).